Consider the following 130-residue polypeptide: Small ribosomal subunit protein uS9 (130 aa).

The interval 98 to 130 is disordered; sequence LKRAGLLTRDPRMKERKKPGLKKARRSPQFSKR. Basic residues predominate over residues 111–130; sequence KERKKPGLKKARRSPQFSKR.

This sequence belongs to the universal ribosomal protein uS9 family.

In Staphylococcus carnosus (strain TM300), this protein is Small ribosomal subunit protein uS9 (rpsI).